Reading from the N-terminus, the 193-residue chain is UPF0215 protein PH0071 (193 aa).

Belongs to the UPF0215 family.

This chain is UPF0215 protein PH0071, found in Pyrococcus horikoshii (strain ATCC 700860 / DSM 12428 / JCM 9974 / NBRC 100139 / OT-3).